The sequence spans 122 residues: Large ribosomal subunit protein uL18 (122 aa).

Over residues 1–22 (MDKNKKLQSKRLRRRRHVRNKL) the composition is skewed to basic residues. The tract at residues 1–25 (MDKNKKLQSKRLRRRRHVRNKLRGS) is disordered.

This sequence belongs to the universal ribosomal protein uL18 family. In terms of assembly, part of the 50S ribosomal subunit; part of the 5S rRNA/L5/L18/L25 subcomplex. Contacts the 5S and 23S rRNAs.

This is one of the proteins that bind and probably mediate the attachment of the 5S RNA into the large ribosomal subunit, where it forms part of the central protuberance. The protein is Large ribosomal subunit protein uL18 of Rhodopirellula baltica (strain DSM 10527 / NCIMB 13988 / SH1).